Reading from the N-terminus, the 338-residue chain is Holliday junction branch migration complex subunit RuvB (338 aa).

A compositionally biased stretch (basic and acidic residues) spans 1 to 14 (MENDHGILSDHPSG). The interval 1 to 21 (MENDHGILSDHPSGEEESQVE) is disordered. Residues 3–185 (NDHGILSDHP…FGIVEHMNYY (183 aa)) form a large ATPase domain (RuvB-L) region. ATP contacts are provided by residues Leu24, Arg25, Gly66, Lys69, Thr70, Thr71, 132–134 (EDY), Arg175, Tyr185, and Arg222. Thr70 contributes to the Mg(2+) binding site. The interval 186 to 256 (TQDELTKIIF…IVKQALSLLQ (71 aa)) is small ATPAse domain (RuvB-S). The interval 259–338 (DRGLDEIDRK…LGIEYPTDKN (80 aa)) is head domain (RuvB-H). DNA is bound by residues Arg314 and Arg319.

The protein belongs to the RuvB family. As to quaternary structure, homohexamer. Forms an RuvA(8)-RuvB(12)-Holliday junction (HJ) complex. HJ DNA is sandwiched between 2 RuvA tetramers; dsDNA enters through RuvA and exits via RuvB. An RuvB hexamer assembles on each DNA strand where it exits the tetramer. Each RuvB hexamer is contacted by two RuvA subunits (via domain III) on 2 adjacent RuvB subunits; this complex drives branch migration. In the full resolvosome a probable DNA-RuvA(4)-RuvB(12)-RuvC(2) complex forms which resolves the HJ.

The protein localises to the cytoplasm. The catalysed reaction is ATP + H2O = ADP + phosphate + H(+). The RuvA-RuvB-RuvC complex processes Holliday junction (HJ) DNA during genetic recombination and DNA repair, while the RuvA-RuvB complex plays an important role in the rescue of blocked DNA replication forks via replication fork reversal (RFR). RuvA specifically binds to HJ cruciform DNA, conferring on it an open structure. The RuvB hexamer acts as an ATP-dependent pump, pulling dsDNA into and through the RuvAB complex. RuvB forms 2 homohexamers on either side of HJ DNA bound by 1 or 2 RuvA tetramers; 4 subunits per hexamer contact DNA at a time. Coordinated motions by a converter formed by DNA-disengaged RuvB subunits stimulates ATP hydrolysis and nucleotide exchange. Immobilization of the converter enables RuvB to convert the ATP-contained energy into a lever motion, pulling 2 nucleotides of DNA out of the RuvA tetramer per ATP hydrolyzed, thus driving DNA branch migration. The RuvB motors rotate together with the DNA substrate, which together with the progressing nucleotide cycle form the mechanistic basis for DNA recombination by continuous HJ branch migration. Branch migration allows RuvC to scan DNA until it finds its consensus sequence, where it cleaves and resolves cruciform DNA. In Limosilactobacillus reuteri (strain DSM 20016) (Lactobacillus reuteri), this protein is Holliday junction branch migration complex subunit RuvB.